A 189-amino-acid polypeptide reads, in one-letter code: MALPFALLMALVVLSCKSSCSLDCDLPQTHSLGHRRTMMLLAQMRRISLFSCLKDRHDFRFPQEEFDGNQFQKAEAISVLHEVIQQTFNLFSTKDSSVAWDERLLDKLYTELYQQLNDLEACVMQEVWVGGTPLMNEDSILAVRKYFQRITLYLTEKKYSPCAWEVVRAEIMRSFSSSRNLQERLRRKE.

Residues 1–20 (MALPFALLMALVVLSCKSSC) form the signal peptide. Disulfide bonds link Cys24–Cys122 and Cys52–Cys162.

The protein belongs to the alpha/beta interferon family.

Its subcellular location is the secreted. Functionally, produced by macrophages, IFN-alpha have antiviral activities. Interferon stimulates the production of two enzymes: a protein kinase and an oligoadenylate synthetase. This Homo sapiens (Human) protein is Interferon alpha-6 (IFNA6).